Consider the following 1220-residue polypeptide: Protein patched homolog 1 (1220 aa).

The segment at 1-27 (MASDPRDPGPAGGVFGDLPPSYTRSPP) is disordered. The Cytoplasmic segment spans residues 1–84 (MASDPRDPGP…GCHIQRHCGK (84 aa)). A helical membrane pass occupies residues 85–105 (VLFIGLLVFGALSVGLRVAAI). At 106–419 (ETDIEKLWVE…LNDIMKSFSD (314 aa)) the chain is on the extracellular side. Asn397 carries N-linked (GlcNAc...) asparagine glycosylation. The chain crosses the membrane as a helical span at residues 420–440 (VSVIRVAGGYLLMLAYACVTM). The region spanning 421 to 579 (SVIRVAGGYL…LLIFPAILSL (159 aa)) is the SSD domain. The Cytoplasmic segment spans residues 441-449 (LRWDCAKSQ). A helical membrane pass occupies residues 450-470 (GAVGLAGVLLVALSVAAGLGL). Residues 471–484 (CSLLGLSFNAATTQ) are Extracellular-facing. The helical transmembrane segment at 485 to 505 (VLPSLALGIGVDDMFLLGHSF) threads the bilayer. Over 506–528 (TETRSNIPFKERTGDCLRRTGTS) the chain is Cytoplasmic. A helical transmembrane segment spans residues 529–549 (VALTSVNNMIAFFMAALVPIP). At 550-558 (ALRAFSLQA) the chain is on the extracellular side. The chain crosses the membrane as a helical span at residues 559 to 579 (AVVVVFNFAMALLIFPAILSL). Residues 580 to 739 (DLHRREDKRL…APLLLKPETK (160 aa)) lie on the Cytoplasmic side of the membrane. Residues 740 to 760 (TVVVVVFVALLSLSLYGTTMV) traverse the membrane as a helical segment. Residues 761–1016 (HDGLYLTDIV…WEQYIGLRHW (256 aa)) lie on the Extracellular side of the membrane. Asn865 and Asn888 each carry an N-linked (GlcNAc...) asparagine glycan. The helical transmembrane segment at 1017–1037 (FLLSISVVLACTFLVCAILLL) threads the bilayer. The Cytoplasmic portion of the chain corresponds to 1038–1044 (NPWTAGV). The helical transmembrane segment at 1045 to 1065 (IVFILPMMTVELFGIMGLIGI) threads the bilayer. Over 1066-1072 (KLSAIPV) the chain is Extracellular. The chain crosses the membrane as a helical span at residues 1073–1093 (VILIASVGIGVEFTVHIALGF). At 1094–1110 (LTAIGDRNTRSAVAMEH) the chain is on the cytoplasmic side. The helical transmembrane segment at 1111–1131 (MFAPVIDGAISTLLGVLMLAG) threads the bilayer. Residues 1132-1143 (SEFDFIMRYFFA) lie on the Extracellular side of the membrane. A helical membrane pass occupies residues 1144–1164 (VLAILTLLGILNGLVLLPVLL). Residues 1165 to 1220 (SLMGPPAEVVPANNANHLQSPSPEPMPPPMNHHGYYAGHIPKASHQAFSETSDSEY) lie on the Cytoplasmic side of the membrane.

This sequence belongs to the patched family. In terms of processing, glycosylation is necessary for SHH binding. In terms of tissue distribution, detected in embryonic presomitic mesoderm, neuroectoderm, tissue surrounding the notochord, ventral neural tube.

The protein resides in the membrane. Acts as a receptor for sonic hedgehog (SHH), indian hedgehog (IHH) and desert hedgehog (DHH). Associates with the smoothened protein (SMO) to transduce the hedgehog's proteins signal. The protein is Protein patched homolog 1 (ptch1) of Danio rerio (Zebrafish).